The following is a 140-amino-acid chain: Large-conductance mechanosensitive channel (140 aa).

Transmembrane regions (helical) follow at residues 16–36 (VVDLAVGVIIGAAFGKIVDSI) and 86–106 (GSFLTIVLNFLILAFIIFLMV).

It belongs to the MscL family. Homopentamer.

It localises to the cell inner membrane. Functionally, channel that opens in response to stretch forces in the membrane lipid bilayer. May participate in the regulation of osmotic pressure changes within the cell. This Anaeromyxobacter sp. (strain K) protein is Large-conductance mechanosensitive channel.